We begin with the raw amino-acid sequence, 709 residues long: Fatty acid oxidation complex subunit alpha (709 aa).

Residues 1-188 are enoyl-CoA hydratase; sequence MEKTFNLTRR…KMGLVNDVVP (188 aa). The interval 308 to 709 is 3-hydroxyacyl-CoA dehydrogenase; sequence RKVKKAVILG…EMAAEKTRFF (402 aa).

This sequence in the N-terminal section; belongs to the enoyl-CoA hydratase/isomerase family. The protein in the central section; belongs to the 3-hydroxyacyl-CoA dehydrogenase family. As to quaternary structure, heterotetramer of two alpha chains (FadJ) and two beta chains (FadI).

It is found in the cytoplasm. The catalysed reaction is a (3S)-3-hydroxyacyl-CoA = a (2E)-enoyl-CoA + H2O. It catalyses the reaction a 4-saturated-(3S)-3-hydroxyacyl-CoA = a (3E)-enoyl-CoA + H2O. It carries out the reaction a (3S)-3-hydroxyacyl-CoA + NAD(+) = a 3-oxoacyl-CoA + NADH + H(+). The enzyme catalyses (3S)-3-hydroxybutanoyl-CoA = (3R)-3-hydroxybutanoyl-CoA. The protein operates within lipid metabolism; fatty acid beta-oxidation. Functionally, catalyzes the formation of a hydroxyacyl-CoA by addition of water on enoyl-CoA. Also exhibits 3-hydroxyacyl-CoA epimerase and 3-hydroxyacyl-CoA dehydrogenase activities. The polypeptide is Fatty acid oxidation complex subunit alpha (Shewanella sp. (strain MR-7)).